The chain runs to 61 residues: uncharacterized protein (61 aa).

A run of 2 helical transmembrane segments spans residues 4–24 and 34–54; these read IIAF…VASM and SSVI…IMPM.

The protein localises to the cell membrane. This is an uncharacterized protein from Bacillus subtilis (strain 168).